A 120-amino-acid polypeptide reads, in one-letter code: MKATRKQLTQRRHFRIRRRVEGTGDRPRLAVFRSHKHIYAQVIDDEKQHTLVAASTLDKDLKGELASGGNISASTAVGNLIAKRALEKGITKVVFDRGGNLYHGRVKALADAAREAGLDF.

The protein belongs to the universal ribosomal protein uL18 family. In terms of assembly, part of the 50S ribosomal subunit; part of the 5S rRNA/L5/L18/L25 subcomplex. Contacts the 5S and 23S rRNAs.

Functionally, this is one of the proteins that bind and probably mediate the attachment of the 5S RNA into the large ribosomal subunit, where it forms part of the central protuberance. The protein is Large ribosomal subunit protein uL18 of Picosynechococcus sp. (strain ATCC 27264 / PCC 7002 / PR-6) (Agmenellum quadruplicatum).